Reading from the N-terminus, the 381-residue chain is MYINYLKDLIGFKSVTPKSDGAIEYINDLLKQHGFKTEIKIFGDSKSEQVTNLYAVFGSNEPNICFVGHVDVVLAGNHELWHNASPFKVSQQDGKIYGRGAVDMKGAIACFLAASLDFIKNNTDFKGSISFLLTSDEEGKAKHGTKEMLQYIYDQGYKINFAIVGEPTCEKEIGDAIKIGRRGSVNFKLNIEGLSGHVAYPHKANNPLPCLIIILNELTNIKLDEGTEFFQRSNLEVTNIEVSNNTSNVIPASTEASFNIRFNNLHSAETLAKQVEEIIKQHCKEYKVDYKLEYSSSAESFIQNPSDKIKEFAKVVEHTLKIKPEFSTSGGTSDARFVKNYCPLVEFGLLSETAHKINEYTKISDLQKLYDVYYNFLMEIL.

Histidine 69 contacts Zn(2+). Aspartate 71 is an active-site residue. Aspartate 103 contacts Zn(2+). Residue glutamate 137 is the Proton acceptor of the active site. Positions 138, 166, and 355 each coordinate Zn(2+).

Belongs to the peptidase M20A family. DapE subfamily. In terms of assembly, homodimer. Requires Zn(2+) as cofactor. Co(2+) is required as a cofactor.

The enzyme catalyses N-succinyl-(2S,6S)-2,6-diaminopimelate + H2O = (2S,6S)-2,6-diaminopimelate + succinate. It functions in the pathway amino-acid biosynthesis; L-lysine biosynthesis via DAP pathway; LL-2,6-diaminopimelate from (S)-tetrahydrodipicolinate (succinylase route): step 3/3. Catalyzes the hydrolysis of N-succinyl-L,L-diaminopimelic acid (SDAP), forming succinate and LL-2,6-diaminopimelate (DAP), an intermediate involved in the bacterial biosynthesis of lysine and meso-diaminopimelic acid, an essential component of bacterial cell walls. The protein is Succinyl-diaminopimelate desuccinylase of Rickettsia africae (strain ESF-5).